The following is a 217-amino-acid chain: Membrane-associated progesterone receptor component 2 (217 aa).

S15 carries O-linked (Xyl...) (chondroitin sulfate) serine glycosylation. A helical transmembrane segment spans residues 40–62 (ALLATGGEMLLNVALVALVLLGA). Phosphoserine is present on residues S84, S98, and S202. The Cytochrome b5 heme-binding domain occupies 96 to 195 (DFSLEQLRQY…EKYDYVGRLL (100 aa)). The disordered stretch occupies residues 196–217 (KPGEEPSEYTDEEDTKDHSKQD). A compositionally biased stretch (acidic residues) spans 200-209 (EPSEYTDEED). The residue at position 204 (Y204) is a Phosphotyrosine. A Phosphothreonine modification is found at T205.

Belongs to the cytochrome b5 family. MAPR subfamily. Interacts with PGRMC1. Interacts with AAAS. In terms of tissue distribution, expressed in brown adipose tissue, white adipose tissue, liver, heart, skeletal muscle, brain and adrenal gland.

The protein resides in the membrane. The protein localises to the nucleus envelope. It localises to the endoplasmic reticulum. Its subcellular location is the secreted. Functionally, required for the maintenance of uterine histoarchitecture and normal female reproductive lifespan. May serve as a universal non-classical progesterone receptor in the uterus. Intracellular heme chaperone required for delivery of labile, or signaling heme, to the nucleus. Plays a role in adipocyte function and systemic glucose homeostasis. In brown fat, which has a high demand for heme, delivery of labile heme in the nucleus regulates the activity of heme-responsive transcriptional repressors such as NR1D1 and BACH1. The sequence is that of Membrane-associated progesterone receptor component 2 from Mus musculus (Mouse).